Consider the following 389-residue polypeptide: PqqA peptide cyclase (389 aa).

The Radical SAM core domain occupies 19-234 (VGLPLWLLAE…TNEYRDQLAA (216 aa)). Residues C33, C37, and C40 each contribute to the [4Fe-4S] cluster site.

It belongs to the radical SAM superfamily. PqqE family. Interacts with PqqD. The interaction is necessary for activity of PqqE. [4Fe-4S] cluster serves as cofactor.

It catalyses the reaction [PQQ precursor protein] + S-adenosyl-L-methionine = E-Y cross-linked-[PQQ precursor protein] + 5'-deoxyadenosine + L-methionine + H(+). Its pathway is cofactor biosynthesis; pyrroloquinoline quinone biosynthesis. Its function is as follows. Catalyzes the cross-linking of a glutamate residue and a tyrosine residue in the PqqA protein as part of the biosynthesis of pyrroloquinoline quinone (PQQ). The sequence is that of PqqA peptide cyclase from Pseudomonas syringae pv. tomato (strain ATCC BAA-871 / DC3000).